Reading from the N-terminus, the 515-residue chain is Cytochrome P450 monooxygenase nsrP (515 aa).

Residues 20-40 (FGTAAFLAVLLSALAFLSYTP) form a helical membrane-spanning segment. Residues Asn-84, Asn-406, and Asn-411 are each glycosylated (N-linked (GlcNAc...) asparagine). Cys-452 contributes to the heme binding site.

It belongs to the cytochrome P450 family. Heme serves as cofactor.

It localises to the membrane. Its pathway is secondary metabolite biosynthesis. Its function is as follows. Cytochrome P450 monooxygenase; part of the gene cluster that mediates the biosynthesis of the tetrahydroxanthone dimer neosartorin, which exhibits antibacterial activity. The two different monomeric units appear to be synthesized by the same set of enzymes, among which the Baeyer-Villiger monooxygenase nsrF is the key enzyme for the divergence of the biosynthetic routes. The pathway begins with the synthesis of atrochrysone thioester by the polyketide synthase nsrB. The atrochrysone carboxyl ACP thioesterase nsrC then breaks the thioester bond and releases the atrochrysone carboxylic acid from AacuL. Atrochrysone carboxylic acid is decarboxylated by the decarboxylase nsrE, and oxidized by the anthrone oxygenase nsrD to yield emodin. Emodin is then reduced to emodin hydroquinone by the oxidoreductase nsrR. A-ring reduction by the short chain dehydrogenase nsrJ, dehydration by the scytalone dehydratase-like protein nsrI and probable spontaneous re-oxidation, results in overall deoxygenation to chrysophanol. The Baeyer-Villiger monooxygenase nsrF accepts chrysophanol as a substrate to insert one oxygen atom at two different positions to yield the precursors of both monomric units. NsrF is promiscuous/flexible in interacting with the 2 (non methylated and methylated) aromatic rings of chrysophanol, thus diverging the biosynthetic pathway at this point. After the hydrolysis of the lactones, methylesterification by the methyltransferase nsrG yields respectively moniliphenone and 2,2',6'-trihydroxy-4-methyl-6-methoxya-cyldiphenylmethanone. The next steps are the hydroxylation by the FAD-dependent monooxygenase nsrK, followed by isomerization by the monooxygenase nsrQ. The short chain dehydrogenase/reductase nsrO then catalyzes the C-5 ketoreduction to give the xanthone skeleton of blennolide C and 5-acetylblennolide A. The acetyltransferase nsrL has a strict substrate specificity and uses only blennolide A but not blennolide C to yield 5-acetylblennolide A as the single-acetylated product. In the final step of the biosynthesis, the heterodimerization of the 2 xanthones, blennolide C and 5-acetylblennolide A, is catalyzed by the cytochrome P450 monooxygenase nsrP. NsrP can utilize at least three different xanthones as its substrates to perform the dimerization reaction. This Aspergillus novofumigatus (strain IBT 16806) protein is Cytochrome P450 monooxygenase nsrP.